The sequence spans 511 residues: Coiled-coil domain-containing protein 125 (511 aa).

Positions 1–12 (MSKVARSSSESD) are enriched in polar residues. A disordered region spans residues 1–110 (MSKVARSSSE…TVDSNSELSN (110 aa)). Basic and acidic residues predominate over residues 43 to 54 (EFSHRSRKRSDG). Polar residues predominate over residues 83 to 108 (QDTFPQVSRISNYRRQSSTVDSNSEL). Coiled coils occupy residues 105-243 (NSEL…LEAL) and 293-325 (RMAA…MADA). Ser-504 is modified (phosphoserine).

Its subcellular location is the cytoplasm. Its function is as follows. May be involved in the regulation of cell migration. This is Coiled-coil domain-containing protein 125 (CCDC125) from Homo sapiens (Human).